Consider the following 479-residue polypeptide: Integrin-linked protein kinase 1 (479 aa).

A phosphoserine mark is found at serine 17 and serine 26. The segment at 29–73 (FTRQSSLDPRRTNMRFSFGRQSSLDPIRRSPDSSKSDDEPHMSVP) is disordered. Basic and acidic residues predominate over residues 54 to 69 (PIRRSPDSSKSDDEPH). ANK repeat units lie at residues 77–106 (DSTM…DVNS) and 110–139 (DGRT…NIDA). One can recognise a Protein kinase domain in the interval 194 to 461 (LEVQVRKSDG…EIIIRLDKIV (268 aa)). Residues 200-208 (KSDGISKGA) and lysine 222 each bind ATP. The Proton acceptor role is filled by aspartate 319.

It belongs to the protein kinase superfamily. Ser/Thr protein kinase family. As to quaternary structure, interacts with CML9 and POT5/HAK5. In terms of processing, autophosphorylated at Ser-17 and Ser-26.

Its subcellular location is the cell membrane. It localises to the endoplasmic reticulum membrane. The catalysed reaction is L-seryl-[protein] + ATP = O-phospho-L-seryl-[protein] + ADP + H(+). The enzyme catalyses L-threonyl-[protein] + ATP = O-phospho-L-threonyl-[protein] + ADP + H(+). Kinase activity is suppressed by interaction with CML9. Functions as a link between plant defense pathways, stress responses and potassium homeostasis. Promotes osmotic stress sensitivity, responses to the bacterial-derived pathogen-associated molecular pattern (PAMP) flg22, and resistance to bacterial pathogens. Promotes the accumulation of POT5/HAK5, a potassium transporter that mediates high-affinity uptake during potassium deficiency. The sequence is that of Integrin-linked protein kinase 1 from Arabidopsis thaliana (Mouse-ear cress).